Reading from the N-terminus, the 967-residue chain is Muscular LMNA-interacting protein (967 aa).

S129 carries the phosphoserine modification. Disordered stretches follow at residues 132–154 (EDEATCRQGEQGPPGGPGNIATR), 302–336 (GLASEAQKKMSTSNVLNPKEDVRTCPAPASGASLT), 432–462 (QKVKQTPPTSKKSLSSGSLTTGSTEQEHQAS), 506–628 (GSTL…SASH), 644–685 (QTLQ…TPSL), 786–838 (SMHS…SQLT), and 929–967 (FSVRDEQEKSPTLLSQDTYNKLGHPMVTIPEHDTLDSKE). Residues 144 to 811 (PPGGPGNIAT…GSETIKTPTT (668 aa)) form a required for interaction with ISL1 region. Over residues 437–455 (TPPTSKKSLSSGSLTTGST) the composition is skewed to low complexity. The segment covering 508–523 (TLRSNTTSPQPQTDTF) has biased composition (polar residues). Residues 528–541 (VPSVTPVLSPLSSS) show a composition bias toward low complexity. A compositionally biased stretch (basic and acidic residues) spans 543-556 (GRKDGDSRTPEKNR). Composition is skewed to polar residues over residues 558 to 567 (ICIQPSTLAS) and 658 to 685 (GSATCPSRTQMPENTASNHSSRVSTPSL). S792 carries the phosphoserine modification. The segment covering 800–811 (MLGSETIKTPTT) has biased composition (polar residues). The span at 826-835 (SSSSSTASES) shows a compositional bias: low complexity. The span at 938-947 (SPTLLSQDTY) shows a compositional bias: polar residues. Residues 958-967 (PEHDTLDSKE) are compositionally biased toward basic and acidic residues.

Directly interacts with LMNA. Interacts with ISL1 (via N-terminal domain); the interaction represses ISL1 transactivator activity. Interactions of ISL1 with MLIP1 and GCN5/KAT2A may be mutually exclusive. In terms of processing, may be ubiquitinated by UBE3C ubiquitin ligase; ubiquitination is followed by protein degradation. In terms of tissue distribution, predominantly expressed in the heart and skeletal muscle, but detected at lower levels in the lung and brain (at protein level). Also detected in smooth muscle, thymus and kidney. In brain, expressed by a subpopulation of cells within the hippocampus and cortex. In heart, expressed by cardiomyocytes. Expression is reduced in hypertrophic hearts at the transcript level. However, expression in hypertrophic hearts induced by transverse aortic constriction do not differ from control at the protein level.

The protein resides in the nucleus. Its subcellular location is the nucleus envelope. It localises to the PML body. The protein localises to the cytoplasm. It is found in the cytosol. The protein resides in the cell membrane. Its subcellular location is the sarcolemma. Its function is as follows. Required for myoblast differentiation into myotubes, possibly acting as a transcriptional regulator of the myogenic program. Required for cardiac adaptation to stress through integrated regulation of the AKT/mTOR pathways and FOXO1. Regulates cardiac homeostasis and plays a role in the protection against cardiac hypertrophy. Binds chromatin. May act as a transcriptional cofactor for ISL1, repressing its transcriptional activity. May also repress MYOCD transcriptional activity. The protein is Muscular LMNA-interacting protein of Mus musculus (Mouse).